Reading from the N-terminus, the 669-residue chain is DNA ligase (669 aa).

NAD(+)-binding positions include 33–37, 82–83, and Glu-115; these read DVTYD and SL. Lys-117 (N6-AMP-lysine intermediate) is an active-site residue. Residues Arg-138, Glu-172, Lys-286, and Lys-310 each contribute to the NAD(+) site. Zn(2+) is bound by residues Cys-401, Cys-404, Cys-417, and Cys-422. A BRCT domain is found at 589–669; it reads IDSSFLFGKK…DIKNLVNLDD (81 aa).

This sequence belongs to the NAD-dependent DNA ligase family. LigA subfamily. Mg(2+) is required as a cofactor. It depends on Mn(2+) as a cofactor.

It carries out the reaction NAD(+) + (deoxyribonucleotide)n-3'-hydroxyl + 5'-phospho-(deoxyribonucleotide)m = (deoxyribonucleotide)n+m + AMP + beta-nicotinamide D-nucleotide.. Functionally, DNA ligase that catalyzes the formation of phosphodiester linkages between 5'-phosphoryl and 3'-hydroxyl groups in double-stranded DNA using NAD as a coenzyme and as the energy source for the reaction. It is essential for DNA replication and repair of damaged DNA. The protein is DNA ligase of Borrelia recurrentis (strain A1).